Here is a 503-residue protein sequence, read N- to C-terminus: Intracellular exo-alpha-(1-&gt;5)-L-arabinofuranosidase (503 aa).

3 residues coordinate alpha-L-arabinofuranose: Glu-27, Asn-72, and Asn-172. Glu-173 acts as the Proton donor/acceptor in catalysis. Tyr-244, Glu-292, and Gln-352 together coordinate alpha-L-arabinofuranose. Residue Glu-292 is the Nucleophile of the active site.

Belongs to the glycosyl hydrolase 51 family. Homohexamer; trimer of dimers.

The protein localises to the cytoplasm. The catalysed reaction is Hydrolysis of terminal non-reducing alpha-L-arabinofuranoside residues in alpha-L-arabinosides.. It functions in the pathway glycan metabolism; L-arabinan degradation. In terms of biological role, involved in the degradation of arabinan and is a key enzyme in the complete degradation of the plant cell wall. Catalyzes the cleavage of terminal alpha-(1-&gt;5)-arabinofuranosyl bonds in small oligosaccharides as alpha-(1-&gt;5)-linked arabinobiose/arabinotriose, but does not display significant activity against linear non-substituted arabinan. It is also highly efficient in the cleavage of alpha-(1-&gt;3)-linked arabinoside of xylobiose and of the alpha-(1-&gt;3)-linked arabinoside decorations of polymeric wheat arabinoxylan. It exhibits very low activity against sugar beet arabinan. The sequence is that of Intracellular exo-alpha-(1-&gt;5)-L-arabinofuranosidase from Acetivibrio thermocellus (strain ATCC 27405 / DSM 1237 / JCM 9322 / NBRC 103400 / NCIMB 10682 / NRRL B-4536 / VPI 7372) (Clostridium thermocellum).